Reading from the N-terminus, the 142-residue chain is Transcriptional regulator MraZ (142 aa).

2 SpoVT-AbrB domains span residues 5–51 (ASAL…PRPE) and 77–120 (AADV…DAAT).

Belongs to the MraZ family. Forms oligomers.

The protein resides in the cytoplasm. It is found in the nucleoid. The sequence is that of Transcriptional regulator MraZ from Ralstonia nicotianae (strain ATCC BAA-1114 / GMI1000) (Ralstonia solanacearum).